A 202-amino-acid chain; its full sequence is LexA repressor (202 aa).

Residues Arg28 to Lys48 constitute a DNA-binding region (H-T-H motif). Active-site for autocatalytic cleavage activity residues include Ser119 and Lys156.

This sequence belongs to the peptidase S24 family. As to quaternary structure, homodimer.

It catalyses the reaction Hydrolysis of Ala-|-Gly bond in repressor LexA.. Functionally, represses a number of genes involved in the response to DNA damage (SOS response), including recA and lexA. Binds to the 16 bp palindromic sequence 5'-CTGTATATATATACAG-3'. In the presence of single-stranded DNA, RecA interacts with LexA causing an autocatalytic cleavage which disrupts the DNA-binding part of LexA, leading to derepression of the SOS regulon and eventually DNA repair. This is LexA repressor from Yersinia pseudotuberculosis serotype O:1b (strain IP 31758).